A 128-amino-acid chain; its full sequence is Azurin (128 aa).

In terms of domain architecture, Plastocyanin-like spans 1–128 (AECKVTVDST…SMMKGTVTVK (128 aa)). A disulfide bridge connects residues Cys-3 and Cys-26. His-46, Cys-112, His-117, and Met-121 together coordinate Cu cation.

The protein localises to the periplasm. Functionally, transfers electrons from cytochrome c551 to cytochrome oxidase. In Pseudomonas fluorescens biotype A, this protein is Azurin.